The sequence spans 197 residues: dTTP/UTP pyrophosphatase (197 aa).

Asp-70 (proton acceptor) is an active-site residue.

It belongs to the Maf family. YhdE subfamily. The cofactor is a divalent metal cation.

The protein resides in the cytoplasm. The catalysed reaction is dTTP + H2O = dTMP + diphosphate + H(+). It catalyses the reaction UTP + H2O = UMP + diphosphate + H(+). Its function is as follows. Nucleoside triphosphate pyrophosphatase that hydrolyzes dTTP and UTP. May have a dual role in cell division arrest and in preventing the incorporation of modified nucleotides into cellular nucleic acids. The sequence is that of dTTP/UTP pyrophosphatase (yceF2) from Salmonella choleraesuis (strain SC-B67).